The following is a 392-amino-acid chain: WD repeat-containing protein GTS1 (392 aa).

WD repeat units follow at residues 81–124 (GHSD…QVSR), 128–167 (GNDQ…QVAC), 171–211 (SHMD…NDDD), and 323–368 (GHID…TEIN).

In terms of tissue distribution, expressed in germinating seeds, rosettes leaves, flowers and siliques.

Its function is as follows. Involved in the control of plant growth development. Acts as negative regulator of seed germination, cell division in meristematic regions, plant growth and overall biomass accumulation. May function by regulating ribosome activities and biogenesis in plant cells. This Arabidopsis thaliana (Mouse-ear cress) protein is WD repeat-containing protein GTS1.